The following is a 557-amino-acid chain: 2-succinyl-5-enolpyruvyl-6-hydroxy-3-cyclohexene-1-carboxylate synthase (557 aa).

This sequence belongs to the TPP enzyme family. MenD subfamily. In terms of assembly, homodimer. Requires Mg(2+) as cofactor. It depends on Mn(2+) as a cofactor. Thiamine diphosphate serves as cofactor.

It carries out the reaction isochorismate + 2-oxoglutarate + H(+) = 5-enolpyruvoyl-6-hydroxy-2-succinyl-cyclohex-3-ene-1-carboxylate + CO2. It functions in the pathway quinol/quinone metabolism; 1,4-dihydroxy-2-naphthoate biosynthesis; 1,4-dihydroxy-2-naphthoate from chorismate: step 2/7. It participates in quinol/quinone metabolism; menaquinone biosynthesis. Functionally, catalyzes the thiamine diphosphate-dependent decarboxylation of 2-oxoglutarate and the subsequent addition of the resulting succinic semialdehyde-thiamine pyrophosphate anion to isochorismate to yield 2-succinyl-5-enolpyruvyl-6-hydroxy-3-cyclohexene-1-carboxylate (SEPHCHC). The sequence is that of 2-succinyl-5-enolpyruvyl-6-hydroxy-3-cyclohexene-1-carboxylate synthase from Staphylococcus aureus (strain MRSA252).